A 630-amino-acid chain; its full sequence is 1-deoxy-D-xylulose-5-phosphate synthase (630 aa).

Residues H87 and 128–130 (GHS) each bind thiamine diphosphate. D159 is a binding site for Mg(2+). Thiamine diphosphate-binding positions include 160-161 (GA), N188, F295, and E377. N188 serves as a coordination point for Mg(2+).

The protein belongs to the transketolase family. DXPS subfamily. As to quaternary structure, homodimer. Mg(2+) serves as cofactor. The cofactor is thiamine diphosphate.

The catalysed reaction is D-glyceraldehyde 3-phosphate + pyruvate + H(+) = 1-deoxy-D-xylulose 5-phosphate + CO2. Its pathway is metabolic intermediate biosynthesis; 1-deoxy-D-xylulose 5-phosphate biosynthesis; 1-deoxy-D-xylulose 5-phosphate from D-glyceraldehyde 3-phosphate and pyruvate: step 1/1. Functionally, catalyzes the acyloin condensation reaction between C atoms 2 and 3 of pyruvate and glyceraldehyde 3-phosphate to yield 1-deoxy-D-xylulose-5-phosphate (DXP). This is 1-deoxy-D-xylulose-5-phosphate synthase from Pseudomonas syringae pv. syringae (strain B728a).